The sequence spans 269 residues: Holocytochrome-c synthase (269 aa).

The interval Met1 to Asp72 is disordered. HRM repeat units lie at residues Gly25–His30 and Glu41–Gln46.

Belongs to the cytochrome c-type heme lyase family.

The protein resides in the mitochondrion inner membrane. The protein localises to the mitochondrion intermembrane space. The enzyme catalyses holo-[cytochrome c] = apo-[cytochrome c] + heme b. Functionally, lyase that catalyzes the covalent linking of the heme group to the cytochrome C apoprotein to produce the mature functional cytochrome. This is Holocytochrome-c synthase (CYC3) from Saccharomyces cerevisiae (strain ATCC 204508 / S288c) (Baker's yeast).